The chain runs to 912 residues: DNA ligase 4 (912 aa).

ATP is bound by residues Glu276, Thr277, Lys278, Leu279, Arg283, Glu336, Lys350, Phe372, Glu432, Lys437, Lys454, and Lys456. The N6-AMP-lysine intermediate role is filled by Lys278. Glu336 lines the Mg(2+) pocket. Glu432 is a binding site for Mg(2+). A required for catalytic activity region spans residues 615–625 (LASKHLYIDEY). 2 consecutive BRCT domains span residues 659-748 (KVSS…PAFM) and 809-912 (CKLC…QFLI).

This sequence belongs to the ATP-dependent DNA ligase family. As to quaternary structure, interacts with XRCC4; the LIG4-XRCC4 subcomplex has a 1:2 stoichiometry. Component of the core long-range non-homologous end joining (NHEJ) complex (also named DNA-PK complex) composed of PRKDC, LIG4, XRCC4, XRCC6/Ku70, XRCC5/Ku86 and NHEJ1/XLF. Additional component of the NHEJ complex includes PAXX. Following autophosphorylation, PRKDC dissociates from DNA, leading to formation of the short-range NHEJ complex, composed of LIG4, XRCC4, XRCC6/Ku70, XRCC5/Ku86 and NHEJ1/XLF. The cofactor is Mg(2+).

The protein resides in the nucleus. It catalyses the reaction ATP + (deoxyribonucleotide)n-3'-hydroxyl + 5'-phospho-(deoxyribonucleotide)m = (deoxyribonucleotide)n+m + AMP + diphosphate.. Functionally, DNA ligase involved in DNA non-homologous end joining (NHEJ); required for double-strand break (DSB) repair and V(D)J recombination. Catalyzes the NHEJ ligation step of the broken DNA during DSB repair by resealing the DNA breaks after the gap filling is completed. Joins single-strand breaks in a double-stranded polydeoxynucleotide in an ATP-dependent reaction. LIG4 is mechanistically flexible: it can ligate nicks as well as compatible DNA overhangs alone, while in the presence of XRCC4, it can ligate ends with 2-nucleotides (nt) microhomology and 1-nt gaps. Forms a subcomplex with XRCC4; the LIG4-XRCC4 subcomplex is responsible for the NHEJ ligation step and XRCC4 enhances the joining activity of LIG4. The polypeptide is DNA ligase 4 (Gallus gallus (Chicken)).